Reading from the N-terminus, the 437-residue chain is UPF0597 protein Shal_0864 (437 aa).

The protein belongs to the UPF0597 family.

The protein is UPF0597 protein Shal_0864 of Shewanella halifaxensis (strain HAW-EB4).